A 269-amino-acid polypeptide reads, in one-letter code: NAD kinase (269 aa).

D45 acts as the Proton acceptor in catalysis. Residues D45–G46, N121–E122, R147, D149, T160–S165, and A184 contribute to the NAD(+) site.

Belongs to the NAD kinase family. A divalent metal cation is required as a cofactor.

It localises to the cytoplasm. It catalyses the reaction NAD(+) + ATP = ADP + NADP(+) + H(+). Its function is as follows. Involved in the regulation of the intracellular balance of NAD and NADP, and is a key enzyme in the biosynthesis of NADP. Catalyzes specifically the phosphorylation on 2'-hydroxyl of the adenosine moiety of NAD to yield NADP. This Pediococcus pentosaceus (strain ATCC 25745 / CCUG 21536 / LMG 10740 / 183-1w) protein is NAD kinase.